We begin with the raw amino-acid sequence, 426 residues long: Serine--tRNA ligase (426 aa).

233–235 (TAE) serves as a coordination point for L-serine. Residue 264–266 (RSE) coordinates ATP. Glu-287 contributes to the L-serine binding site. 351–354 (EISS) contacts ATP. Ser-387 is a binding site for L-serine.

It belongs to the class-II aminoacyl-tRNA synthetase family. Type-1 seryl-tRNA synthetase subfamily. In terms of assembly, homodimer. The tRNA molecule binds across the dimer.

Its subcellular location is the cytoplasm. It carries out the reaction tRNA(Ser) + L-serine + ATP = L-seryl-tRNA(Ser) + AMP + diphosphate + H(+). The catalysed reaction is tRNA(Sec) + L-serine + ATP = L-seryl-tRNA(Sec) + AMP + diphosphate + H(+). Its pathway is aminoacyl-tRNA biosynthesis; selenocysteinyl-tRNA(Sec) biosynthesis; L-seryl-tRNA(Sec) from L-serine and tRNA(Sec): step 1/1. Its function is as follows. Catalyzes the attachment of serine to tRNA(Ser). Is also able to aminoacylate tRNA(Sec) with serine, to form the misacylated tRNA L-seryl-tRNA(Sec), which will be further converted into selenocysteinyl-tRNA(Sec). In Pseudomonas putida (strain ATCC 700007 / DSM 6899 / JCM 31910 / BCRC 17059 / LMG 24140 / F1), this protein is Serine--tRNA ligase.